A 115-amino-acid chain; its full sequence is uncharacterized protein (115 aa).

This is an uncharacterized protein from Aquifex aeolicus (strain VF5).